The chain runs to 288 residues: MTDQATRFRLDIAYQGTDFAGWARQPDLRTVQGTLEEALATIFRCSGEPPSLTVAGRTDAGVHATGQVAHVDLSPEQVALLRRPHGKREPQLAHDALKRRVNGVLGPVPDVLVSRATEAPAGFDARFSALWRRYEYRVADRIALRDPLQRHRTAWVPNTLDVDAMDRGAHGMLGLHDFASYCKAREGATTIRTLQAFSWRRDAEGVLLGEVAADAFCHSMVRALVGACVEVGEGKLRPGDLVTLRDERQRTSAFKVMPARGLTLREVGYPVDAELGRRAEQTRGLRTL.

The active-site Nucleophile is the D59. Y134 is a binding site for substrate.

It belongs to the tRNA pseudouridine synthase TruA family. Homodimer.

It catalyses the reaction uridine(38/39/40) in tRNA = pseudouridine(38/39/40) in tRNA. Functionally, formation of pseudouridine at positions 38, 39 and 40 in the anticodon stem and loop of transfer RNAs. This Leifsonia xyli subsp. xyli (strain CTCB07) protein is tRNA pseudouridine synthase A.